The sequence spans 397 residues: Purine ribonucleoside efflux pump NepI (397 aa).

The Cytoplasmic portion of the chain corresponds to M1–A21. Residues V22 to L42 form a helical membrane-spanning segment. Residues L43 to E54 lie on the Periplasmic side of the membrane. Residues G55–I75 traverse the membrane as a helical segment. Residues T76–R85 lie on the Cytoplasmic side of the membrane. The chain crosses the membrane as a helical span at residues Y86–N106. Position 107 (S107) is a topological domain, periplasmic. A helical transmembrane segment spans residues F108–M128. Topologically, residues S129–S147 are cytoplasmic. The helical transmembrane segment at V148–G168 threads the bilayer. Topologically, residues G169–N175 are periplasmic. A helical transmembrane segment spans residues V176–P196. Residues S197–R215 are Cytoplasmic-facing. The helical transmembrane segment at P216–F236 threads the bilayer. Residues T237–T255 lie on the Periplasmic side of the membrane. The helical transmembrane segment at L256–L276 threads the bilayer. Residues K277 to K281 are Cytoplasmic-facing. The chain crosses the membrane as a helical span at residues L282–G302. Over S303 to K305 the chain is Periplasmic. The helical transmembrane segment at T306–W326 threads the bilayer. The Cytoplasmic portion of the chain corresponds to S327–S343. The helical transmembrane segment at I344–L364 threads the bilayer. The Periplasmic segment spans residues D365–N366. Residues F367–V387 traverse the membrane as a helical segment. Residues A388–S397 lie on the Cytoplasmic side of the membrane.

It belongs to the major facilitator superfamily. DHA1 family. NepI (TC 2.A.1.2.26) subfamily.

It is found in the cell inner membrane. The catalysed reaction is inosine(in) + H(+)(out) = inosine(out) + H(+)(in). It carries out the reaction guanosine(in) + H(+)(out) = guanosine(out) + H(+)(in). Involved in the efflux of purine ribonucleosides, such as inosine and guanosine. This chain is Purine ribonucleoside efflux pump NepI, found in Salmonella choleraesuis (strain SC-B67).